The sequence spans 525 residues: Neuropilin and tolloid-like protein 2 (525 aa).

The signal sequence occupies residues 1–22 (MALERLCSVLKVLLITVLVVEG). The Extracellular segment spans residues 23-347 (IAVAQKTQDG…GVFEQITKTH (325 aa)). Intrachain disulfides connect C45-C72, C100-C122, C177-C207, C234-C256, C297-C309, C304-C322, and C316-C331. CUB domains lie at 45-159 (CGIW…YSFI) and 177-292 (CQFE…FTSF). Residues 296–332 (PCTSSTFFCHSNMCINNSLVCNGVQNCAYPWDENHCK) enclose the LDL-receptor class A domain. The N-linked (GlcNAc...) asparagine glycan is linked to N311. Residues 348-368 (GTIIGITSGIVLVLLIISILV) traverse the membrane as a helical segment. Residues 369–525 (QVKQPRKKVM…SAQASISIDF (157 aa)) are Cytoplasmic-facing. Phosphoserine is present on S409.

Interacts with GRIK2 and GRIK3, but neither with AMPA-nor with NMDA-sensitive glutamate receptors. Post-translationally, N-glycosylated.

The protein resides in the membrane. Functionally, accessory subunit of neuronal kainate-sensitive glutamate receptors, GRIK2 and GRIK3. Increases kainate-receptor channel activity, slowing the decay kinetics of the receptors, without affecting their expression at the cell surface, and increasing the open probability of the receptor channels. Modulates the agonist sensitivity of kainate receptors. Slows the decay of kainate receptor-mediated excitatory postsynaptic currents (EPSCs), thus directly influencing synaptic transmission. The protein is Neuropilin and tolloid-like protein 2 (NETO2) of Homo sapiens (Human).